The chain runs to 239 residues: Transcription factor MYB10 (239 aa).

2 consecutive HTH myb-type domains span residues 11 to 63 (KSQV…INYL) and 64 to 118 (RPGL…KKRL). DNA-binding regions (H-T-H motif) lie at residues 39–63 (WRSL…INYL) and 91–114 (WSKI…NTHL).

In terms of tissue distribution, expressed in cauline leaves and siliques.

Its subcellular location is the nucleus. Involved in metal ions homeostasis, including iron ions (Fe) acquisition, via the regulation of NAS4 and NAS2 genes expression. Necessary for plant survival in alkaline soil where iron availability is greatly restricted. Triggers tolerance to nickel (Ni) and zinc (Zn) ions. The protein is Transcription factor MYB10 of Arabidopsis thaliana (Mouse-ear cress).